A 535-amino-acid chain; its full sequence is T-complex protein 1 subunit zeta 2 (535 aa).

The protein belongs to the TCP-1 chaperonin family. Heterooligomeric complex of about 850 to 900 kDa that forms two stacked rings, 12 to 16 nm in diameter.

It localises to the cytoplasm. In terms of biological role, molecular chaperone; assists the folding of proteins upon ATP hydrolysis. Known to play a role, in vitro, in the folding of actin and tubulin. This chain is T-complex protein 1 subunit zeta 2, found in Arabidopsis thaliana (Mouse-ear cress).